The following is a 215-amino-acid chain: Probable transaldolase (215 aa).

Lys-83 serves as the catalytic Schiff-base intermediate with substrate.

This sequence belongs to the transaldolase family. Type 3B subfamily.

Its subcellular location is the cytoplasm. It catalyses the reaction D-sedoheptulose 7-phosphate + D-glyceraldehyde 3-phosphate = D-erythrose 4-phosphate + beta-D-fructose 6-phosphate. It participates in carbohydrate degradation; pentose phosphate pathway; D-glyceraldehyde 3-phosphate and beta-D-fructose 6-phosphate from D-ribose 5-phosphate and D-xylulose 5-phosphate (non-oxidative stage): step 2/3. In terms of biological role, transaldolase is important for the balance of metabolites in the pentose-phosphate pathway. The protein is Probable transaldolase of Methanococcus vannielii (strain ATCC 35089 / DSM 1224 / JCM 13029 / OCM 148 / SB).